A 444-amino-acid polypeptide reads, in one-letter code: UPF0053 protein YhdP (444 aa).

Residues 1–201 (MDIVNLILVA…YKSGEINQSE (201 aa)) form the CNNM transmembrane domain. 3 helical membrane passes run 7 to 27 (ILVAVLIALTAFFVASEFAII), 61 to 81 (ACQLGITLTSIGLGVLGESTI), and 101 to 121 (VISFIFAYAIITFLHVVVGEL). 2 consecutive CBS domains span residues 220–282 (MIPR…SVDS) and 284–344 (ISQF…IRDE).

It belongs to the UPF0053 family.

It localises to the cell membrane. The polypeptide is UPF0053 protein YhdP (yhdP) (Bacillus subtilis (strain 168)).